The following is a 33-amino-acid chain: Brevinin-2Eb (33 aa).

A disulfide bridge connects residues C27 and C33.

The protein belongs to the frog skin active peptide (FSAP) family. Brevinin subfamily. In terms of tissue distribution, expressed by the skin glands.

The protein localises to the secreted. In terms of biological role, shows antibacterial activity against representative Gram-negative and Gram-positive bacterial species, and hemolytic activity. This Pelophylax lessonae (Pool frog) protein is Brevinin-2Eb.